The following is a 135-amino-acid chain: Fluoride-specific ion channel FluC (135 aa).

Helical transmembrane passes span 7-27 (IAAI…LGLA), 37-57 (IGTL…IAYV), 70-90 (FMIT…AELF), and 105-125 (LGLH…TIGL). Na(+) contacts are provided by Gly-77 and Ser-80.

Belongs to the fluoride channel Fluc/FEX (TC 1.A.43) family.

The protein localises to the cell inner membrane. The enzyme catalyses fluoride(in) = fluoride(out). With respect to regulation, na(+) is not transported, but it plays an essential structural role and its presence is essential for fluoride channel function. Functionally, fluoride-specific ion channel. Important for reducing fluoride concentration in the cell, thus reducing its toxicity. This Xanthomonas oryzae pv. oryzae (strain MAFF 311018) protein is Fluoride-specific ion channel FluC.